The following is a 307-amino-acid chain: N-acetylglucosaminyl-diphospho-decaprenol L-rhamnosyltransferase (307 aa).

This sequence belongs to the glycosyltransferase 2 family. The cofactor is Mn(2+). Requires Mg(2+) as cofactor.

It carries out the reaction N-acetyl-alpha-D-glucosaminyl-1-diphospho-trans,octa-cis-decaprenol + dTDP-beta-L-rhamnose = alpha-L-rhamnosyl-(1-&gt;3)-N-acetyl-alpha-D-glucosaminyl-diphospho-trans,octa-cis-decaprenol + dTDP + H(+). In terms of biological role, involved in the biosynthesis of the mycolylarabinogalactan-peptidoglycan (mAGP) complex, an essential component of the mycobacterial cell wall. Catalyzes the transfer of the rhamnosyl moiety from dTDP-rhamnosyl (dTDP-Rha) onto the decaprenyl-pyrophosphoryl-GlcNAc (C50-PP-GlcNAc), yielding rhamnosyl-decaprenyl-pyrophosphoryl-GlcNAc (Rha-C50-PP-GlcNAc). This Mycobacterium tuberculosis (strain CDC 1551 / Oshkosh) protein is N-acetylglucosaminyl-diphospho-decaprenol L-rhamnosyltransferase (wbbL).